Consider the following 82-residue polypeptide: U16-lycotoxin-Ls1b (82 aa).

An N-terminal signal peptide occupies residues 1–22; that stretch reads MSPKVQALLLLVGLITFLEVHA. Residues 23–34 constitute a propeptide that is removed on maturation; it reads EEELSETVESER. Intrachain disulfides connect cysteine 36–cysteine 51, cysteine 43–cysteine 56, cysteine 50–cysteine 67, and cysteine 58–cysteine 65.

This sequence belongs to the neurotoxin 02 (plectoxin) family. 04 (U16-lycotoxin) subfamily. In terms of tissue distribution, expressed by the venom gland.

It localises to the secreted. This Lycosa singoriensis (Wolf spider) protein is U16-lycotoxin-Ls1b.